The sequence spans 428 residues: Trigger factor (428 aa).

In terms of domain architecture, PPIase FKBP-type spans 163-248 (GDTAVIDFEG…VHEVKAKQLP (86 aa)).

This sequence belongs to the FKBP-type PPIase family. Tig subfamily.

It localises to the cytoplasm. The enzyme catalyses [protein]-peptidylproline (omega=180) = [protein]-peptidylproline (omega=0). Its function is as follows. Involved in protein export. Acts as a chaperone by maintaining the newly synthesized protein in an open conformation. Functions as a peptidyl-prolyl cis-trans isomerase. In Geobacillus thermodenitrificans (strain NG80-2), this protein is Trigger factor.